A 286-amino-acid polypeptide reads, in one-letter code: MENNKKILESSKKLSSYGDGESRFSFLEKILAPLFLALTAIYFVMLIFPIISMIRYSGGSHIIQTLYDQDNIKTIILSFVTSLIALIFTFIIGTPTAFCINFVRNKVLSKILDIFVEIPVVLPPAVAGIALLLAFGKNGVVGNFLSNHGINVIFTSTAVIIAQFFVSSALYVRVLRDSVKSVPIELFEVSYVLGAGKIETIIKIMIPMLKKSIVSGLILAWIRSLGEFGATLMFAGNIIGKTRTIPLQIYTYMQDDIKMATAFATILYIMTFVLLLLVRLSIRDDD.

6 consecutive transmembrane segments (helical) span residues Leu-34–Ile-54, Ile-75–Pro-95, Ile-114–Ala-134, Val-152–Val-172, Gly-216–Gly-236, and Ile-257–Leu-277. Residues Ile-75–Val-278 form the ABC transmembrane type-1 domain.

It belongs to the binding-protein-dependent transport system permease family. CysTW subfamily.

Its subcellular location is the cell membrane. May be involved in molybdenum transport. The polypeptide is Probable transport system permease protein NifC (nifC) (Clostridium pasteurianum).